A 126-amino-acid chain; its full sequence is Aspartate 1-decarboxylase (126 aa).

Serine 25 functions as the Schiff-base intermediate with substrate; via pyruvic acid in the catalytic mechanism. At serine 25 the chain carries Pyruvic acid (Ser). Threonine 57 provides a ligand contact to substrate. Catalysis depends on tyrosine 58, which acts as the Proton donor. Residue 73–75 coordinates substrate; that stretch reads GAA.

Belongs to the PanD family. As to quaternary structure, heterooctamer of four alpha and four beta subunits. Pyruvate serves as cofactor. In terms of processing, is synthesized initially as an inactive proenzyme, which is activated by self-cleavage at a specific serine bond to produce a beta-subunit with a hydroxyl group at its C-terminus and an alpha-subunit with a pyruvoyl group at its N-terminus.

It is found in the cytoplasm. It carries out the reaction L-aspartate + H(+) = beta-alanine + CO2. The protein operates within cofactor biosynthesis; (R)-pantothenate biosynthesis; beta-alanine from L-aspartate: step 1/1. In terms of biological role, catalyzes the pyruvoyl-dependent decarboxylation of aspartate to produce beta-alanine. The chain is Aspartate 1-decarboxylase from Serratia proteamaculans (strain 568).